A 291-amino-acid chain; its full sequence is Phosphatidylglycerol--prolipoprotein diacylglyceryl transferase (291 aa).

Transmembrane regions (helical) follow at residues 21–41, 60–80, 96–116, 130–150, 198–218, 225–245, and 260–280; these read VALHWYGLMYLVGFVFAMWLA, LLYAGFLGVFLGGRIGYVLFY, WDGGMSFHGGLIGVILVMIIF, FIAPLIPFGLGAGRLGNFING, SQLYELALEGVVLFIILNLFI, GAVSGLFLIGYGAFRIIVEFF, and ISMGQILSIPMIIAGAIMMVW. Residue Arg-143 participates in a 1,2-diacyl-sn-glycero-3-phospho-(1'-sn-glycerol) binding.

The protein belongs to the Lgt family.

The protein resides in the cell inner membrane. The enzyme catalyses L-cysteinyl-[prolipoprotein] + a 1,2-diacyl-sn-glycero-3-phospho-(1'-sn-glycerol) = an S-1,2-diacyl-sn-glyceryl-L-cysteinyl-[prolipoprotein] + sn-glycerol 1-phosphate + H(+). The protein operates within protein modification; lipoprotein biosynthesis (diacylglyceryl transfer). Its function is as follows. Catalyzes the transfer of the diacylglyceryl group from phosphatidylglycerol to the sulfhydryl group of the N-terminal cysteine of a prolipoprotein, the first step in the formation of mature lipoproteins. This is Phosphatidylglycerol--prolipoprotein diacylglyceryl transferase from Salmonella newport (strain SL254).